Here is a 198-residue protein sequence, read N- to C-terminus: Peptidyl-tRNA hydrolase (198 aa).

Tyr-18 contributes to the tRNA binding site. Catalysis depends on His-23, which acts as the Proton acceptor. Positions 69, 71, and 117 each coordinate tRNA.

The protein belongs to the PTH family. In terms of assembly, monomer.

The protein resides in the cytoplasm. The catalysed reaction is an N-acyl-L-alpha-aminoacyl-tRNA + H2O = an N-acyl-L-amino acid + a tRNA + H(+). Hydrolyzes ribosome-free peptidyl-tRNAs (with 1 or more amino acids incorporated), which drop off the ribosome during protein synthesis, or as a result of ribosome stalling. Functionally, catalyzes the release of premature peptidyl moieties from peptidyl-tRNA molecules trapped in stalled 50S ribosomal subunits, and thus maintains levels of free tRNAs and 50S ribosomes. The polypeptide is Peptidyl-tRNA hydrolase (Aeromonas hydrophila subsp. hydrophila (strain ATCC 7966 / DSM 30187 / BCRC 13018 / CCUG 14551 / JCM 1027 / KCTC 2358 / NCIMB 9240 / NCTC 8049)).